The chain runs to 149 residues: Ribonuclease H (149 aa).

In terms of domain architecture, RNase H type-1 spans 1-143 (MNAVEIYTDG…ADMLANRGVE (143 aa)). Residues Asp9, Glu47, Asp69, and Asp135 each contribute to the Mg(2+) site.

Belongs to the RNase H family. In terms of assembly, monomer. It depends on Mg(2+) as a cofactor.

The protein localises to the cytoplasm. The enzyme catalyses Endonucleolytic cleavage to 5'-phosphomonoester.. Endonuclease that specifically degrades the RNA of RNA-DNA hybrids. In Albidiferax ferrireducens (strain ATCC BAA-621 / DSM 15236 / T118) (Rhodoferax ferrireducens), this protein is Ribonuclease H.